The primary structure comprises 111 residues: Cell division protein FtsB (111 aa).

The Cytoplasmic segment spans residues 1–3; that stretch reads MRL. A helical transmembrane segment spans residues 4–21; it reads ITLFLLLLLLAIQYPLWL. Over 22-111 the chain is Periplasmic; sequence GKGGWLRVWD…PPPAGQQAHH (90 aa). Residues 31-64 adopt a coiled-coil conformation; sequence DMQKQVTAQNQRNAELKQRNTKLEGEVKDLKEGT. The interval 89 to 111 is disordered; sequence APAPKTSETPLPPPPPAGQQAHH.

The protein belongs to the FtsB family. As to quaternary structure, part of a complex composed of FtsB, FtsL and FtsQ.

Its subcellular location is the cell inner membrane. Essential cell division protein. May link together the upstream cell division proteins, which are predominantly cytoplasmic, with the downstream cell division proteins, which are predominantly periplasmic. This chain is Cell division protein FtsB, found in Ralstonia pickettii (strain 12J).